The following is an 87-amino-acid chain: Phosphoribosyl-ATP pyrophosphatase (87 aa).

This sequence belongs to the PRA-PH family.

The protein resides in the cytoplasm. It carries out the reaction 1-(5-phospho-beta-D-ribosyl)-ATP + H2O = 1-(5-phospho-beta-D-ribosyl)-5'-AMP + diphosphate + H(+). It functions in the pathway amino-acid biosynthesis; L-histidine biosynthesis; L-histidine from 5-phospho-alpha-D-ribose 1-diphosphate: step 2/9. The protein is Phosphoribosyl-ATP pyrophosphatase of Clavibacter sepedonicus (Clavibacter michiganensis subsp. sepedonicus).